Reading from the N-terminus, the 757-residue chain is Neutral ceramidase 2 (757 aa).

Positions 1–25 are cleaved as a signal peptide; it reads MAVSLPLFQFILFLLLLLLSRTVYA. Residue Asn311 is glycosylated (N-linked (GlcNAc...) asparagine). The active-site Nucleophile is Ser330. Asn348 and Asn657 each carry an N-linked (GlcNAc...) asparagine glycan.

Belongs to the neutral ceramidase family.

The protein resides in the secreted. It is found in the endoplasmic reticulum. Its subcellular location is the golgi apparatus. The enzyme catalyses an N-acylsphing-4-enine + H2O = sphing-4-enine + a fatty acid. Hydrolyzes the sphingolipid ceramide into sphingosine and free fatty acid. The polypeptide is Neutral ceramidase 2 (Arabidopsis thaliana (Mouse-ear cress)).